Reading from the N-terminus, the 532-residue chain is tRNA-2-methylthio-N(6)-dimethylallyladenosine synthase (532 aa).

The disordered stretch occupies residues 1 to 21; the sequence is MTSTVAHGAGSAGPADDVEPM. Residues 24-140 enclose the MTTase N-terminal domain; sequence RTYQVRTYGC…LPALLDRARH (117 aa). [4Fe-4S] cluster-binding residues include cysteine 33, cysteine 69, cysteine 103, cysteine 177, cysteine 181, and cysteine 184. Residues 163–399 form the Radical SAM core domain; sequence RESAYAAWVS…VELQEQISLE (237 aa). The TRAM domain maps to 402–470; that stretch reads RAIVGQRVEL…PHHLIADGGI (69 aa). Residues 510 to 532 form a disordered region; it reads TSCGSAGGCGSADGAGSSAGDPQ. The span at 523–532 shows a compositional bias: low complexity; it reads GAGSSAGDPQ.

The protein belongs to the methylthiotransferase family. MiaB subfamily. Monomer. Requires [4Fe-4S] cluster as cofactor.

It is found in the cytoplasm. The catalysed reaction is N(6)-dimethylallyladenosine(37) in tRNA + (sulfur carrier)-SH + AH2 + 2 S-adenosyl-L-methionine = 2-methylsulfanyl-N(6)-dimethylallyladenosine(37) in tRNA + (sulfur carrier)-H + 5'-deoxyadenosine + L-methionine + A + S-adenosyl-L-homocysteine + 2 H(+). Functionally, catalyzes the methylthiolation of N6-(dimethylallyl)adenosine (i(6)A), leading to the formation of 2-methylthio-N6-(dimethylallyl)adenosine (ms(2)i(6)A) at position 37 in tRNAs that read codons beginning with uridine. The chain is tRNA-2-methylthio-N(6)-dimethylallyladenosine synthase from Mycobacterium ulcerans (strain Agy99).